The chain runs to 186 residues: MACGATLKRSMEFEALMSPQSPKRRRCAPLPGSPATPSPQRCGIRPEMQQGQQQPLPQLGGDRRLTPEQILQNIKQEYTRYQRRRQLEGAFNQSEAGVSNEVQASCSSLTAPSSPGSLVKKDQPTFSLRQVGILCERLLKDHEDKIREEYEQILNIKLAEQYESFVKFTHDQIMRRYGARPASYVS.

A disordered region spans residues 1 to 64 (MACGATLKRS…PLPQLGGDRR (64 aa)). The short motif at 22 to 27 (PKRRRC) is the Nuclear localization signal element. Over residues 49 to 60 (QQGQQQPLPQLG) the composition is skewed to low complexity. The SYVS motif signature appears at 183–186 (SYVS).

Belongs to the akirin family.

The protein resides in the nucleus. Molecular adapter that acts as a bridge between proteins, and which is involved skeletal muscle development. Functions as a signal transducer for MSTN during skeletal muscle regeneration and myogenesis. This Xenopus tropicalis (Western clawed frog) protein is Akirin-1.